A 210-amino-acid polypeptide reads, in one-letter code: Glutathione S-transferase 2 (210 aa).

One can recognise a GST N-terminal domain in the interval 1 to 80 (MDFYYLPLSA…YLVEKYGKQN (80 aa)). Glutathione-binding positions include S9, 50–52 (HTI), and 64–66 (ESR). One can recognise a GST C-terminal domain in the interval 87 to 208 (CPKKRALINQ…AGCLEMKKYF (122 aa)).

It belongs to the GST superfamily. Theta family. Homodimer.

The enzyme catalyses RX + glutathione = an S-substituted glutathione + a halide anion + H(+). In terms of biological role, conjugation of reduced glutathione to a wide number of exogenous and endogenous hydrophobic electrophiles. The protein is Glutathione S-transferase 2 (Gst2) of Musca domestica (House fly).